The chain runs to 431 residues: UDP-N-acetylmuramate--L-alanine ligase (431 aa).

108 to 114 (GAHGKST) lines the ATP pocket.

It belongs to the MurCDEF family.

It is found in the cytoplasm. The enzyme catalyses UDP-N-acetyl-alpha-D-muramate + L-alanine + ATP = UDP-N-acetyl-alpha-D-muramoyl-L-alanine + ADP + phosphate + H(+). The protein operates within cell wall biogenesis; peptidoglycan biosynthesis. Its function is as follows. Cell wall formation. This chain is UDP-N-acetylmuramate--L-alanine ligase, found in Campylobacter jejuni (strain RM1221).